Consider the following 263-residue polypeptide: Small ribosomal subunit protein uS2m (263 aa).

The transit peptide at 1–15 (MLSRKLSPEQLVARR) directs the protein to the mitochondrion.

The protein belongs to the universal ribosomal protein uS2 family. In terms of assembly, component of the mitochondrial small ribosomal subunit (mt-SSU). Mature yeast 74S mitochondrial ribosomes consist of a small (37S) and a large (54S) subunit. The 37S small subunit contains a 15S ribosomal RNA (15S mt-rRNA) and at least 32 different proteins. The 54S large subunit contains a 21S rRNA (21S mt-rRNA) and at least 45 different proteins.

It is found in the mitochondrion. Functionally, component of the mitochondrial ribosome (mitoribosome), a dedicated translation machinery responsible for the synthesis of mitochondrial genome-encoded proteins, including at least some of the essential transmembrane subunits of the mitochondrial respiratory chain. The mitoribosomes are attached to the mitochondrial inner membrane and translation products are cotranslationally integrated into the membrane. The protein is Small ribosomal subunit protein uS2m of Schizosaccharomyces pombe (strain 972 / ATCC 24843) (Fission yeast).